The primary structure comprises 138 residues: Large ribosomal subunit protein uL16 (138 aa).

Residues 1–17 (MLIPRKVKHRKQHHPRQ) show a composition bias toward basic residues. Residues 1-22 (MLIPRKVKHRKQHHPRQRGIAS) form a disordered region.

It belongs to the universal ribosomal protein uL16 family. In terms of assembly, part of the 50S ribosomal subunit.

In terms of biological role, binds 23S rRNA and is also seen to make contacts with the A and possibly P site tRNAs. In Mycobacterium avium (strain 104), this protein is Large ribosomal subunit protein uL16.